Here is a 643-residue protein sequence, read N- to C-terminus: Extracellular metalloproteinase 4 (643 aa).

The first 18 residues, Met1–Ala18, serve as a signal peptide directing secretion. A propeptide spanning residues His19 to Ala254 is cleaved from the precursor. Basic and acidic residues predominate over residues Thr47–Asp57. A disordered region spans residues Thr47 to Ser71. Residues Phe60–Ser71 show a composition bias toward polar residues. N-linked (GlcNAc...) asparagine glycans are attached at residues Asn271 and Asn420. His437 lines the Zn(2+) pocket. Glu438 is a catalytic residue. Zn(2+) is bound at residue His441. N-linked (GlcNAc...) asparagine glycosylation occurs at Asn510.

This sequence belongs to the peptidase M36 family. Zn(2+) is required as a cofactor.

Its subcellular location is the secreted. Functionally, secreted metalloproteinase probably acting as a virulence factor. This is Extracellular metalloproteinase 4 (MEP4) from Trichophyton equinum (Horse ringworm fungus).